We begin with the raw amino-acid sequence, 1061 residues long: NACHT, LRR and PYD domains-containing protein 12 (1061 aa).

The 95-residue stretch at Met1–Val95 folds into the Pyrin domain. Residues Tyr129 to Glu201 enclose the FISNA domain. One can recognise an NACHT domain in the interval Arg211 to Leu528. Residue Gly217–Ser224 participates in ATP binding. LRR repeat units lie at residues His828–Cys848, Arg857–Ser878, Ser885–Glu906, Lys914–Val935, Asn942–Ala962, Arg971–Phe992, Thr999–Lys1020, and Lys1028–Ala1049.

The protein belongs to the NLRP family. As to quaternary structure, interacts (via pyrin domain) with ASC. Interacts (via pyrin domain) with FAF1 (via UBA domain). Interacts with MAP3K14; this interaction promotes proteasomal degradation of MAP3K14. Interacts with NOD2; this interaction promotes degradation of NOD2 through the ubiquitin-proteasome pathway. Interacts with HSPA1A and HSPA8. Interacts with HSP90AA1. Interacts with TRIM25; this interaction inhibits RIGI-mediated signaling pathway. In terms of tissue distribution, detected only in peripheral blood leukocytes, predominantly in eosinophils and granulocytes, and at lower levels in monocytes.

It localises to the cytoplasm. Functionally, plays an essential role as an potent mitigator of inflammation. Primarily expressed in dendritic cells and macrophages, inhibits both canonical and non-canonical NF-kappa-B and ERK activation pathways. Functions as a negative regulator of NOD2 by targeting it to degradation via the proteasome pathway. In turn, promotes bacterial tolerance. Also inhibits the RIGI-mediated immune signaling against RNA viruses by reducing the E3 ubiquitin ligase TRIM25-mediated 'Lys-63'-linked RIGI activation but enhancing the E3 ubiquitin ligase RNF125-mediated 'Lys-48'-linked RIGI degradation. Also acts as a negative regulator of inflammatory response to mitigate obesity and obesity-associated diseases in adipose tissue. In Homo sapiens (Human), this protein is NACHT, LRR and PYD domains-containing protein 12 (NLRP12).